The following is a 402-amino-acid chain: Beta sliding clamp (402 aa).

It belongs to the beta sliding clamp family. As to quaternary structure, forms a ring-shaped head-to-tail homodimer around DNA which binds and tethers DNA polymerases and other proteins to the DNA. The DNA replisome complex has a single clamp-loading complex (3 tau and 1 each of delta, delta', psi and chi subunits) which binds 3 Pol III cores (1 core on the leading strand and 2 on the lagging strand) each with a beta sliding clamp dimer. Additional proteins in the replisome are other copies of gamma, psi and chi, Ssb, DNA helicase and RNA primase.

The protein localises to the cytoplasm. Its function is as follows. Confers DNA tethering and processivity to DNA polymerases and other proteins. Acts as a clamp, forming a ring around DNA (a reaction catalyzed by the clamp-loading complex) which diffuses in an ATP-independent manner freely and bidirectionally along dsDNA. Initially characterized for its ability to contact the catalytic subunit of DNA polymerase III (Pol III), a complex, multichain enzyme responsible for most of the replicative synthesis in bacteria; Pol III exhibits 3'-5' exonuclease proofreading activity. The beta chain is required for initiation of replication as well as for processivity of DNA replication. This is Beta sliding clamp (dnaN) from Mycobacterium tuberculosis (strain CDC 1551 / Oshkosh).